Here is an 82-residue protein sequence, read N- to C-terminus: Sec-independent protein translocase protein TatA (82 aa).

A helical membrane pass occupies residues 1-21; the sequence is MHPPSITQLLIILLIIVLLFG. Positions 42–82 are disordered; it reads AVKEDEEDNQSEENTKSQIKQSESKNENVSKTHTDSQKQDT. Basic and acidic residues predominate over residues 63–82; that stretch reads SESKNENVSKTHTDSQKQDT.

This sequence belongs to the TatA/E family. In terms of assembly, the Tat system comprises two distinct complexes: a TatABC complex, containing multiple copies of TatA, TatB and TatC subunits, and a separate TatA complex, containing only TatA subunits. Substrates initially bind to the TatABC complex, which probably triggers association of the separate TatA complex to form the active translocon.

The protein resides in the cell inner membrane. Functionally, part of the twin-arginine translocation (Tat) system that transports large folded proteins containing a characteristic twin-arginine motif in their signal peptide across membranes. TatA could form the protein-conducting channel of the Tat system. This Helicobacter hepaticus (strain ATCC 51449 / 3B1) protein is Sec-independent protein translocase protein TatA.